A 217-amino-acid polypeptide reads, in one-letter code: Somatotropin (217 aa).

An N-terminal signal peptide occupies residues 1–27 (MMAAGPRTSLLLAFALLCLPWTQMVGA). H46 is a Zn(2+) binding site. C79 and C190 are oxidised to a cystine. Residue S132 is modified to Phosphoserine. E199 serves as a coordination point for Zn(2+). C207 and C215 are oxidised to a cystine.

It belongs to the somatotropin/prolactin family.

The protein localises to the secreted. Functionally, plays an important role in growth control. Its major role in stimulating body growth is to stimulate the liver and other tissues to secrete IGF1. It stimulates both the differentiation and proliferation of myoblasts. It also stimulates amino acid uptake and protein synthesis in muscle and other tissues. This chain is Somatotropin (GH1), found in Giraffa camelopardalis (Giraffe).